The sequence spans 578 residues: Proline--tRNA ligase (578 aa).

Belongs to the class-II aminoacyl-tRNA synthetase family. ProS type 1 subfamily. In terms of assembly, homodimer.

It is found in the cytoplasm. The catalysed reaction is tRNA(Pro) + L-proline + ATP = L-prolyl-tRNA(Pro) + AMP + diphosphate. Functionally, catalyzes the attachment of proline to tRNA(Pro) in a two-step reaction: proline is first activated by ATP to form Pro-AMP and then transferred to the acceptor end of tRNA(Pro). As ProRS can inadvertently accommodate and process non-cognate amino acids such as alanine and cysteine, to avoid such errors it has two additional distinct editing activities against alanine. One activity is designated as 'pretransfer' editing and involves the tRNA(Pro)-independent hydrolysis of activated Ala-AMP. The other activity is designated 'posttransfer' editing and involves deacylation of mischarged Ala-tRNA(Pro). The misacylated Cys-tRNA(Pro) is not edited by ProRS. In Paraburkholderia xenovorans (strain LB400), this protein is Proline--tRNA ligase.